A 101-amino-acid chain; its full sequence is NAD(P)H-quinone oxidoreductase subunit 4L, chloroplastic (101 aa).

3 helical membrane passes run 2–22 (MLEH…YGLI), 32–52 (MCLE…SDFF), and 61–81 (IFSI…SAIV).

This sequence belongs to the complex I subunit 4L family. As to quaternary structure, NDH is composed of at least 16 different subunits, 5 of which are encoded in the nucleus.

The protein localises to the plastid. The protein resides in the chloroplast thylakoid membrane. It catalyses the reaction a plastoquinone + NADH + (n+1) H(+)(in) = a plastoquinol + NAD(+) + n H(+)(out). The catalysed reaction is a plastoquinone + NADPH + (n+1) H(+)(in) = a plastoquinol + NADP(+) + n H(+)(out). In terms of biological role, NDH shuttles electrons from NAD(P)H:plastoquinone, via FMN and iron-sulfur (Fe-S) centers, to quinones in the photosynthetic chain and possibly in a chloroplast respiratory chain. The immediate electron acceptor for the enzyme in this species is believed to be plastoquinone. Couples the redox reaction to proton translocation, and thus conserves the redox energy in a proton gradient. The polypeptide is NAD(P)H-quinone oxidoreductase subunit 4L, chloroplastic (Citrus sinensis (Sweet orange)).